We begin with the raw amino-acid sequence, 257 residues long: Imidazole glycerol phosphate synthase subunit HisF (257 aa).

Residues aspartate 12 and aspartate 131 contribute to the active site.

It belongs to the HisA/HisF family. As to quaternary structure, heterodimer of HisH and HisF.

The protein resides in the cytoplasm. It catalyses the reaction 5-[(5-phospho-1-deoxy-D-ribulos-1-ylimino)methylamino]-1-(5-phospho-beta-D-ribosyl)imidazole-4-carboxamide + L-glutamine = D-erythro-1-(imidazol-4-yl)glycerol 3-phosphate + 5-amino-1-(5-phospho-beta-D-ribosyl)imidazole-4-carboxamide + L-glutamate + H(+). It participates in amino-acid biosynthesis; L-histidine biosynthesis; L-histidine from 5-phospho-alpha-D-ribose 1-diphosphate: step 5/9. In terms of biological role, IGPS catalyzes the conversion of PRFAR and glutamine to IGP, AICAR and glutamate. The HisF subunit catalyzes the cyclization activity that produces IGP and AICAR from PRFAR using the ammonia provided by the HisH subunit. The chain is Imidazole glycerol phosphate synthase subunit HisF from Saccharophagus degradans (strain 2-40 / ATCC 43961 / DSM 17024).